A 490-amino-acid chain; its full sequence is Glutamyl-tRNA(Gln) amidotransferase subunit A (490 aa).

Catalysis depends on charge relay system residues K80 and S155. S179 serves as the catalytic Acyl-ester intermediate.

The protein belongs to the amidase family. GatA subfamily. In terms of assembly, heterotrimer of A, B and C subunits.

It carries out the reaction L-glutamyl-tRNA(Gln) + L-glutamine + ATP + H2O = L-glutaminyl-tRNA(Gln) + L-glutamate + ADP + phosphate + H(+). In terms of biological role, allows the formation of correctly charged Gln-tRNA(Gln) through the transamidation of misacylated Glu-tRNA(Gln) in organisms which lack glutaminyl-tRNA synthetase. The reaction takes place in the presence of glutamine and ATP through an activated gamma-phospho-Glu-tRNA(Gln). In Brevibacillus brevis (strain 47 / JCM 6285 / NBRC 100599), this protein is Glutamyl-tRNA(Gln) amidotransferase subunit A.